Here is a 206-residue protein sequence, read N- to C-terminus: Large ribosomal subunit protein uL4 (206 aa).

The interval 43-78 (ARSGNRKQKDREEVKHTTKKPWRQKGTGRARAGMSS) is disordered. Over residues 49–58 (KQKDREEVKH) the composition is skewed to basic and acidic residues. Over residues 59–70 (TTKKPWRQKGTG) the composition is skewed to basic residues.

It belongs to the universal ribosomal protein uL4 family. In terms of assembly, part of the 50S ribosomal subunit.

One of the primary rRNA binding proteins, this protein initially binds near the 5'-end of the 23S rRNA. It is important during the early stages of 50S assembly. It makes multiple contacts with different domains of the 23S rRNA in the assembled 50S subunit and ribosome. Functionally, forms part of the polypeptide exit tunnel. In Cupriavidus pinatubonensis (strain JMP 134 / LMG 1197) (Cupriavidus necator (strain JMP 134)), this protein is Large ribosomal subunit protein uL4.